The following is a 273-amino-acid chain: Type II restriction enzyme HgiCII (273 aa).

It belongs to the TdeIII type II restriction endonuclease family.

The catalysed reaction is Endonucleolytic cleavage of DNA to give specific double-stranded fragments with terminal 5'-phosphates.. A P subtype restriction enzyme that recognizes the double-stranded sequence 5'-GGWCC-3' and cleaves after G-1. The chain is Type II restriction enzyme HgiCII from Herpetosiphon aurantiacus (Herpetosiphon giganteus).